We begin with the raw amino-acid sequence, 382 residues long: Mannitol-1-phosphate 5-dehydrogenase (382 aa).

3-14 (ALHFGAGNIGRG) contacts NAD(+).

The protein belongs to the mannitol dehydrogenase family.

The catalysed reaction is D-mannitol 1-phosphate + NAD(+) = beta-D-fructose 6-phosphate + NADH + H(+). This Salmonella agona (strain SL483) protein is Mannitol-1-phosphate 5-dehydrogenase.